The following is a 298-amino-acid chain: MAEEKKAPISVWTTVKPFVNGGASGMLATCVIQPIDMIKVRIQLGQGSAASITTNMLKNEGVGAFYKGLSAGLLRQATYTTARLGSFKLLTAKAIESNDGKPLPLYQKALCGLTAGAIGACVGSPADLALIRMQADNTLPLAQRRNYTNAFHALTRISADEGVLALWKGCGPTVVRAMALNMGMLASYDQSAEYMRDNLGFGEMSTVVGASAVSGFCAAACSLPFDFVKTQIQKMQPDAQGKYPYTGSLDCAMKTLKEGGPLKFYSGFPVYCVRIAPHVMMTWIFLNQITKFQKKIGM.

Solcar repeat units follow at residues 12 to 93 (WTTV…LTAK), 103 to 194 (LPLY…SAEY), and 202 to 292 (GEMS…ITKF). The next 6 helical transmembrane spans lie at 18-38 (FVNGGASGMLATCVIQPIDMI), 68-88 (GLSAGLLRQATYTTARLGSFK), 109-129 (ALCGLTAGAIGACVGSPADLA), 169-189 (GCGPTVVRAMALNMGMLASYD), 208-228 (VGASAVSGFCAAACSLPFDFV), and 268-288 (FPVYCVRIAPHVMMTWIFLNQ).

This sequence belongs to the mitochondrial carrier (TC 2.A.29) family. Highly expressed in flower buds and at lower levels in roots, leaves and stems.

It is found in the mitochondrion inner membrane. Functionally, catalyzes the transport of dicarboxylates, such as oxoglutarate, oxaloacetate, malate, and succinate, and of tricarboxylates, such as citrate, isocitrate, cis-aconitate, and trans-aconitate by a counter-exchange mechanism across the inner mitochondrial membrane. Substrate preference in reconstituted proteoliposomes is oxaloacetate &gt; malonate &gt; malate &gt; maleate &gt; succinate &gt; oxoglutarate &gt; citrate &gt; trans-aconitate &gt; cis-aconitate &gt; sulfate &gt; isocitrate. May be important for plant metabolic functions requiring organic acid flux to or from the mitochondria, such as nitrogen assimilation, export of reducing equivalents from the mitochondria, and fatty acid elongation. In Arabidopsis thaliana (Mouse-ear cress), this protein is Mitochondrial dicarboxylate/tricarboxylate transporter DTC (DTC).